Here is a 353-residue protein sequence, read N- to C-terminus: 11-beta-hydroxysteroid dehydrogenase B (353 aa).

A helical; Signal-anchor for type II membrane protein membrane pass occupies residues 10 to 30; that stretch reads LFVPPASLITLAFSWPALCFP. The short motif at 13-26 is the Proline-knob element; it reads PPASLITLAFSWPA. Residues 54–80 and D105 contribute to the NADP(+) site; that span reads GASS…VARR. Substrate is bound at residue S184. Y197 acts as the Proton acceptor in catalysis. NADP(+) is bound by residues 197 to 201 and K201; that span reads YAAAK.

This sequence belongs to the short-chain dehydrogenases/reductases (SDR) family. In terms of tissue distribution, expressed in seeds (at protein level).

Its subcellular location is the lipid droplet. The protein resides in the membrane. The enzyme catalyses an 11beta-hydroxysteroid + NADP(+) = an 11-oxosteroid + NADPH + H(+). Functionally, has dehydrogenase activity against 11 beta-hydroxysteroid and 17 beta-hydroxysteroid. May be involved in signal transduction regulated by various sterols. This is 11-beta-hydroxysteroid dehydrogenase B from Arachis hypogaea (Peanut).